Reading from the N-terminus, the 333-residue chain is Protein FLAP1 homolog A (333 aa).

A helical membrane pass occupies residues 26–46 (VVIIFVLAFTLVFTPTFEAEA). A disordered region spans residues 53–74 (IGGGSFRAPSAPSRSYSGPSGG). Low complexity predominate over residues 58–70 (FRAPSAPSRSYSG). The next 2 membrane-spanning stretches (helical) occupy residues 92-112 (IIPFFGFGGGFGGIFGILVMI) and 261-281 (GEYILVTIIAAALGNLNLPAV).

It belongs to the FLAP family.

Its subcellular location is the cellular thylakoid membrane. The protein resides in the cell inner membrane. Essential for photosynthetic growth under fluctuating light by modulating PxcA- and PxcL-dependent intracellular pH regulation via proton transport (e.g. transient pH reduction upon transition from dark to light followed by an increase in the light until light-to-dark shift). In Synechocystis sp. (strain ATCC 27184 / PCC 6803 / Kazusa), this protein is Protein FLAP1 homolog A.